The primary structure comprises 602 residues: Potassium voltage-gated channel subfamily A member 5 (602 aa).

The interval 1–202 (MEISLVPLEN…FYQLGDEAME (202 aa)) is tetramerization domain. Topologically, residues 1–238 (MEISLVPLEN…LIFEYPESSG (238 aa)) are cytoplasmic. Positions 58 to 107 (EDANQGGRPLPPMAQELPQPRRLSAEDEEGEGDPGLGTVEEDQAPQDAGS) are disordered. The residue at position 81 (Ser81) is a Phosphoserine; by CK2 and PKA. Lys212 participates in a covalent cross-link: Glycyl lysine isopeptide (Lys-Gly) (interchain with G-Cter in SUMO). A helical membrane pass occupies residues 239 to 260 (SARAIAIVSVLVILISIITFCL). The Extracellular segment spans residues 261-314 (ETLPEFRDERELLRHPPVPPQPPAPAPGINGSVSGALSSGPTVAPLLPRTLADP). The chain crosses the membrane as a helical span at residues 315 to 336 (FFIVETTCVIWFTFELLVRFFA). A lipid anchor (S-palmitoyl cysteine) is attached at Cys337. At 337–347 (CPSKAEFSRNI) the chain is on the cytoplasmic side. A helical membrane pass occupies residues 348–368 (MNIIDVVAIFPYFITLGTELA). Over 369–384 (EQQPGGGGQNGQQAMS) the chain is Extracellular. Residues 385-405 (LAILRVIRLVRVFRIFKLSRH) form a helical; Voltage-sensor membrane-spanning segment. Over 406–420 (SKGLQILGKTLQASM) the chain is Cytoplasmic. The interval 407-420 (KGLQILGKTLQASM) is S4-S5 linker. A helical transmembrane segment spans residues 421–442 (RELGLLIFFLFIGVILFSSAVY). At 443 to 456 (FAEADNHGSHFSSI) the chain is on the extracellular side. Positions 457–468 (PDAFWWAVVTMT) form an intramembrane region, helical. The Selectivity filter motif lies at 469–474 (TVGYGD). Residues 469 to 476 (TVGYGDMR) lie within the membrane without spanning it. Topologically, residues 477–483 (PITVGGK) are extracellular. The helical transmembrane segment at 484–512 (IVGSLCAIAGVLTIALPVPVIVSNFNYFY) threads the bilayer. At 513 to 602 (HRETDHEEQA…CLDTSRETDL (90 aa)) the chain is on the cytoplasmic side. Residues 523-536 (ALKEEQGNQRRESG) show a composition bias toward basic and acidic residues. The disordered stretch occupies residues 523-543 (ALKEEQGNQRRESGLDTGGQR). Residue Lys525 forms a Glycyl lysine isopeptide (Lys-Gly) (interchain with G-Cter in SUMO) linkage. Phosphoserine; by PKA occurs at positions 535, 546, and 569. The short motif at 600-602 (TDL) is the PDZ-binding element.

Belongs to the potassium channel family. A (Shaker) (TC 1.A.1.2) subfamily. Kv1.5/KCNA5 sub-subfamily. As to quaternary structure, homotetramer and heterotetramer of potassium channel proteins. Interacts with DLG1, which enhances channel currents. Forms a ternary complex with DLG1 and CAV3. Interacts with KCNAB1. Interacts with UBE2I. Interacts with XIRP2; the interaction is required for normal action potential configuration in the heart. Post-translationally, glycosylated. In terms of processing, sumoylated on Lys-212, and Lys-525, preferentially with SUMO3. Sumoylation regulates the voltage sensitivity of the channel. In terms of tissue distribution, expressed equally in atrium, ventricle, aorta and skeletal muscle. Weaker expression in brain.

Its subcellular location is the cell membrane. The catalysed reaction is K(+)(in) = K(+)(out). Its function is as follows. Voltage-gated potassium channel that mediates transmembrane potassium transport in excitable membranes. Forms tetrameric potassium-selective channels through which potassium ions pass in accordance with their electrochemical gradient. The channel alternates between opened and closed conformations in response to the voltage difference across the membrane. Can form functional homotetrameric channels and heterotetrameric channels that contain variable proportions of KCNA1, KCNA2, KCNA4, KCNA5, and possibly other family members as well; channel properties depend on the type of alpha subunits that are part of the channel. Channel properties are modulated by cytoplasmic beta subunits that regulate the subcellular location of the alpha subunits and promote rapid inactivation. Homotetrameric channels display rapid activation and slow inactivation. Required for normal electrical conduction including formation of the infranodal ventricular conduction system and normal action potential configuration, as a result of its interaction with XIRP2. May play a role in regulating the secretion of insulin in normal pancreatic islets. The chain is Potassium voltage-gated channel subfamily A member 5 (Kcna5) from Rattus norvegicus (Rat).